We begin with the raw amino-acid sequence, 141 residues long: MEIRVFRQEDFEEVITLWERCDLLRPWNDPEMDIERKMNHDVSLFLVAEVNGEVVGTVMGGYDGHRGSAYYLGVHPEFRGRGIANALLNRLEKKLIARGCPKIQINVPEDNDMVLGMYERLGYEHADMLSLGKRLIEDEEY.

The N-acetyltransferase domain maps to 1-141; sequence MEIRVFRQED…GKRLIEDEEY (141 aa).

The protein belongs to the acetyltransferase family. YpeA subfamily.

The protein is Acetyltransferase YpeA of Shigella boydii serotype 4 (strain Sb227).